The primary structure comprises 727 residues: Putative E3 ubiquitin-protein ligase UNKL (727 aa).

The tract at residues 1–21 (MPSVSKAAAAALSGSPPQTEK) is disordered. 4 consecutive C3H1-type zinc fingers follow at residues 75–104 (YSPD…HRTT), 115–145 (YYKT…HGPL), 243–277 (QYRS…HSRT), and 285–313 (IYKS…HTEK). Over residues 330–339 (STSAYSSQPG) the composition is skewed to polar residues. 3 disordered regions span residues 330–360 (STSA…DSKQ), 446–514 (LTGP…ATLG), and 543–562 (SPSP…SPNS). A compositionally biased stretch (low complexity) spans 463 to 495 (SLPRSPSLHSSSSLSTSPLSSLSQSLSGPLVSS). The RING-type zinc-finger motif lies at 686 to 721 (CVACQERAHGTVLRPCQHRVLCEPCAASTPECPYCK).

The protein belongs to the unkempt family. In terms of assembly, interacts with the GTP-bound form of Rac1. Interacts with Baf60b/Smarcd2. In terms of processing, ubiquitination is enhanced by activated Rac1. The presence of the RING finger domain is not essential for ubiquitination to occur. As to expression, ubiquitous.

It is found in the cytoplasm. The protein resides in the nucleus. The protein operates within protein modification; protein ubiquitination. Its function is as follows. May participate in a protein complex showing an E3 ligase activity regulated by Rac1. Ubiquitination is directed towards itself and possibly other substrates, such as Baf60b/Smarcd2. Intrinsic E3 ligase activity has not been proven. This Mus musculus (Mouse) protein is Putative E3 ubiquitin-protein ligase UNKL (Unkl).